Reading from the N-terminus, the 351-residue chain is MNPPKSAPDAQGLSYRDAGVDIDAGDALIDKIKPFAKKTLRDGVLGGIGGFGALFEVPKKYKEPVLVSGTDGVGTKLKLAFHLNKHDTVGQDLVAMSVNDILVQGAEPLFFLDYFACGKLDVDTAATVVKGIAQGCELSGCALIGGETAEMPGMYPDGEYDLAGFAVGAVEKSKIIDGSTIAEGDVVLGLASSGIHSNGFSLVRKIIERANPDLSADFHGRSLADALMAPTRIYVKPLLALMQKLSVKGMAHITGGGLVENIPRVLREGLTAELDQNAWPLPPLFKWLQEHGGVADAEMHRVFNCGIGMAVIVSAADADAAIADLTAAGEQVWKIGTVRATREGEAQTVVV.

This sequence belongs to the AIR synthase family.

Its subcellular location is the cytoplasm. It carries out the reaction 2-formamido-N(1)-(5-O-phospho-beta-D-ribosyl)acetamidine + ATP = 5-amino-1-(5-phospho-beta-D-ribosyl)imidazole + ADP + phosphate + H(+). It functions in the pathway purine metabolism; IMP biosynthesis via de novo pathway; 5-amino-1-(5-phospho-D-ribosyl)imidazole from N(2)-formyl-N(1)-(5-phospho-D-ribosyl)glycinamide: step 2/2. This Burkholderia cenocepacia (strain ATCC BAA-245 / DSM 16553 / LMG 16656 / NCTC 13227 / J2315 / CF5610) (Burkholderia cepacia (strain J2315)) protein is Phosphoribosylformylglycinamidine cyclo-ligase.